A 471-amino-acid polypeptide reads, in one-letter code: Protein naked cuticle homolog 1 (471 aa).

Disordered stretches follow at residues 1–23 (MGKL…GDSF) and 41–82 (QRCP…DEDD). Glycine 2 carries the N-myristoyl glycine lipid modification. Residues 62-75 (GTRELVGDTSREAL) are compositionally biased toward basic and acidic residues. The interaction with DVL1, DVL2 and DVL3 stretch occupies residues 125 to 190 (QCDVSVEEDS…LRVKLTVAPD (66 aa)). One can recognise an EF-hand domain in the interval 131-166 (EEDSRQEWTFTLYDFDNNGKVTREDITSLLHTIYEV). Ca(2+)-binding residues include aspartate 144, aspartate 146, asparagine 148, lysine 150, and aspartate 155. Disordered regions lie at residues 273-314 (GPGS…QGVD), 337-382 (GTQD…SPSA), and 448-471 (QAVQ…FYQP). Residues 453–471 (HEHHHHHEHHHHYHHFYQP) are compositionally biased toward basic residues.

Belongs to the NKD family. Interacts with DVL1, DVL2, DVL3 and PPP2R3A. As to expression, highly expressed in lung. Also expressed in brain, heart, kidney, liver, skin, stomach and testis. Within the testis expression is found in the seminiferous epithelium and round and elongating spermatids.

Its subcellular location is the cell membrane. It is found in the cytoplasm. Functionally, cell autonomous antagonist of the canonical Wnt signaling pathway. May activate a second Wnt signaling pathway that controls planar cell polarity. Required for spermatogenesis. This chain is Protein naked cuticle homolog 1 (Nkd1), found in Mus musculus (Mouse).